The primary structure comprises 332 residues: Ketol-acid reductoisomerase (NADP(+)) (332 aa).

Residues 2–182 enclose the KARI N-terminal Rossmann domain; sequence AKIYHDLEVS…GATRAGVLET (181 aa). Residues 25–28, Arg-48, Ser-53, and 83–86 contribute to the NADP(+) site; these read YGSQ and DTEQ. Residue His-108 is part of the active site. NADP(+) is bound at residue Gly-134. Positions 183–328 constitute a KARI C-terminal knotted domain; it reads TFKEETETDL…KVIREMMPWL (146 aa). Mg(2+)-binding residues include Asp-191, Glu-195, Glu-227, and Glu-231. Residue Ser-252 coordinates substrate.

Belongs to the ketol-acid reductoisomerase family. Mg(2+) serves as cofactor.

The enzyme catalyses (2R)-2,3-dihydroxy-3-methylbutanoate + NADP(+) = (2S)-2-acetolactate + NADPH + H(+). It catalyses the reaction (2R,3R)-2,3-dihydroxy-3-methylpentanoate + NADP(+) = (S)-2-ethyl-2-hydroxy-3-oxobutanoate + NADPH + H(+). It functions in the pathway amino-acid biosynthesis; L-isoleucine biosynthesis; L-isoleucine from 2-oxobutanoate: step 2/4. The protein operates within amino-acid biosynthesis; L-valine biosynthesis; L-valine from pyruvate: step 2/4. Functionally, involved in the biosynthesis of branched-chain amino acids (BCAA). Catalyzes an alkyl-migration followed by a ketol-acid reduction of (S)-2-acetolactate (S2AL) to yield (R)-2,3-dihydroxy-isovalerate. In the isomerase reaction, S2AL is rearranged via a Mg-dependent methyl migration to produce 3-hydroxy-3-methyl-2-ketobutyrate (HMKB). In the reductase reaction, this 2-ketoacid undergoes a metal-dependent reduction by NADPH to yield (R)-2,3-dihydroxy-isovalerate. The chain is Ketol-acid reductoisomerase (NADP(+)) from Dictyoglomus thermophilum (strain ATCC 35947 / DSM 3960 / H-6-12).